A 370-amino-acid polypeptide reads, in one-letter code: Cytochrome b (370 aa).

A run of 4 helical transmembrane segments spans residues 25–45 (FGSM…FLAV), 69–90 (WLMQ…YIHI), 105–125 (WLSG…GYVL), and 170–190 (FFAL…LHVM). Positions 75 and 89 each coordinate heme b. The heme b site is built by histidine 174 and histidine 188. Histidine 193 lines the a ubiquinone pocket. The next 4 helical transmembrane spans lie at 218 to 238 (YKDL…VSFS), 280 to 300 (LGGA…PFTH), 312 to 332 (FMQM…WTAT), and 339 to 358 (FTLI…ISNP).

Belongs to the cytochrome b family. The cytochrome bc1 complex contains 3 respiratory subunits (MT-CYB, CYC1 and UQCRFS1), 2 core proteins (UQCRC1 and UQCRC2) and probably 6 low-molecular weight proteins. Heme b serves as cofactor.

The protein resides in the mitochondrion inner membrane. Component of the ubiquinol-cytochrome c reductase complex (complex III or cytochrome b-c1 complex) that is part of the mitochondrial respiratory chain. The b-c1 complex mediates electron transfer from ubiquinol to cytochrome c. Contributes to the generation of a proton gradient across the mitochondrial membrane that is then used for ATP synthesis. This chain is Cytochrome b (MT-CYB), found in Eunectes notaeus (Yellow anaconda).